Reading from the N-terminus, the 346-residue chain is tRNA N6-adenosine threonylcarbamoyltransferase (346 aa).

The Fe cation site is built by His111 and His115. Residues Leu134–Gly138, Asp167, Gly180, and Asn279 contribute to the substrate site. Asp307 serves as a coordination point for Fe cation.

This sequence belongs to the KAE1 / TsaD family. Fe(2+) serves as cofactor.

The protein localises to the cytoplasm. The enzyme catalyses L-threonylcarbamoyladenylate + adenosine(37) in tRNA = N(6)-L-threonylcarbamoyladenosine(37) in tRNA + AMP + H(+). Required for the formation of a threonylcarbamoyl group on adenosine at position 37 (t(6)A37) in tRNAs that read codons beginning with adenine. Is involved in the transfer of the threonylcarbamoyl moiety of threonylcarbamoyl-AMP (TC-AMP) to the N6 group of A37, together with TsaE and TsaB. TsaD likely plays a direct catalytic role in this reaction. This is tRNA N6-adenosine threonylcarbamoyltransferase from Burkholderia cenocepacia (strain ATCC BAA-245 / DSM 16553 / LMG 16656 / NCTC 13227 / J2315 / CF5610) (Burkholderia cepacia (strain J2315)).